We begin with the raw amino-acid sequence, 181 residues long: Protein Syd (181 aa).

The protein belongs to the Syd family.

Its subcellular location is the cell inner membrane. Functionally, interacts with the SecY protein in vivo. May bind preferentially to an uncomplexed state of SecY, thus functioning either as a chelating agent for excess SecY in the cell or as a regulatory factor that negatively controls the translocase function. In Alteromonas mediterranea (strain DSM 17117 / CIP 110805 / LMG 28347 / Deep ecotype), this protein is Protein Syd.